We begin with the raw amino-acid sequence, 309 residues long: Nucleotide-binding protein cgR_1639 (309 aa).

Gly-32–Ser-39 is an ATP binding site. A GTP-binding site is contributed by Asp-83–Ser-86.

Belongs to the RapZ-like family.

In terms of biological role, displays ATPase and GTPase activities. The sequence is that of Nucleotide-binding protein cgR_1639 from Corynebacterium glutamicum (strain R).